Reading from the N-terminus, the 477-residue chain is MPIKNNSKNEKKIYFVIGLGRSGFWAAKYLRSLGKKVIVWESNENEELSETKEILEKLDISVCLNKQFLFEEFSECLNQIEAVVISPAIPIDHKTIIKLKEKGIEVLGEVNIAWESLKNINWIGITGTNGKTTVTHLLSHILRTNNLLAPFAGNIGTPLCKIAYSIKSKNIDWLVAELSSYQIEIATLCIKPKIGIWTTFTADHLDRHKTLDNYFKIKNSLLKQSEFRIYNYDDIHLRENFKSLSKGIWITTSSKQSDLDHCDYWINNEDFIVERQENLLSLKNFKLKGNHNTQNLLLAIAAARKIGLSPEKIKNALLSYEQLPHRMETIYQSNKLEIINDSKATNFDSSTAGIKAIKGAPIIISGGKLKSGSYIEWVNIINKKAKAVFLFGESSQTLKKLILEGGFKKDIFIFNDLSEVINYVYSYIENNQIETLLFSPSCSSFDQFRNYEERGDIFKKLIHEKFNLKLFAHKEFS.

127–133 (GTNGKTT) serves as a coordination point for ATP.

It belongs to the MurCDEF family.

The protein resides in the cytoplasm. It catalyses the reaction UDP-N-acetyl-alpha-D-muramoyl-L-alanine + D-glutamate + ATP = UDP-N-acetyl-alpha-D-muramoyl-L-alanyl-D-glutamate + ADP + phosphate + H(+). Its pathway is cell wall biogenesis; peptidoglycan biosynthesis. In terms of biological role, cell wall formation. Catalyzes the addition of glutamate to the nucleotide precursor UDP-N-acetylmuramoyl-L-alanine (UMA). The chain is UDP-N-acetylmuramoylalanine--D-glutamate ligase from Prochlorococcus marinus (strain MIT 9515).